A 154-amino-acid polypeptide reads, in one-letter code: Protein disulfide-isomerase LQY1, chloroplastic (154 aa).

The transit peptide at 1-43 directs the protein to the chloroplast; that stretch reads MPVSAPSPPRLHSPFIHCPINFTPSSFSARNLRSPSTSYPRIK. The helical transmembrane segment at 51–71 threads the bilayer; that stretch reads VVAISVGVASVALGIGIPVFY. The CR-type zinc finger occupies 77–147; sequence NAAKRENTQP…SGVQPRYLDR (71 aa). Zn(2+) contacts are provided by Cys-87, Cys-90, Cys-98, Cys-101, Cys-121, Cys-124, Cys-132, and Cys-135.

This sequence belongs to the BSD2 chaperone family. Interacts with the photosystem II core subunits. Interacts with HHL1. Zn(2+) serves as cofactor.

The protein localises to the plastid. It localises to the chloroplast thylakoid membrane. It carries out the reaction Catalyzes the rearrangement of -S-S- bonds in proteins.. Protein disulfide-isomerase probably involved upon formation of a complex with HHL1 in maintaining photosystem II (PSII) activity under high light by regulating repair and reassembly of PSII complexes. This chain is Protein disulfide-isomerase LQY1, chloroplastic, found in Arabidopsis thaliana (Mouse-ear cress).